We begin with the raw amino-acid sequence, 760 residues long: 5-methyltetrahydropteroyltriglutamate--homocysteine methyltransferase (760 aa).

5-methyltetrahydropteroyltri-L-glutamate is bound by residues 17-20 (RELK) and Lys118. L-homocysteine contacts are provided by residues 434 to 436 (IGS) and Glu487. L-methionine is bound by residues 434-436 (IGS) and Glu487. Residues 518–519 (RC) and Trp564 contribute to the 5-methyltetrahydropteroyltri-L-glutamate site. Residue Asp602 participates in L-homocysteine binding. Position 602 (Asp602) interacts with L-methionine. Position 608 (Glu608) interacts with 5-methyltetrahydropteroyltri-L-glutamate. Positions 644, 646, and 668 each coordinate Zn(2+). Residue His697 is the Proton donor of the active site. Position 729 (Cys729) interacts with Zn(2+).

Belongs to the vitamin-B12 independent methionine synthase family. Requires Zn(2+) as cofactor.

It catalyses the reaction 5-methyltetrahydropteroyltri-L-glutamate + L-homocysteine = tetrahydropteroyltri-L-glutamate + L-methionine. Its pathway is amino-acid biosynthesis; L-methionine biosynthesis via de novo pathway; L-methionine from L-homocysteine (MetE route): step 1/1. In terms of biological role, catalyzes the transfer of a methyl group from 5-methyltetrahydrofolate to homocysteine resulting in methionine formation. The protein is 5-methyltetrahydropteroyltriglutamate--homocysteine methyltransferase of Buchnera aphidicola subsp. Cinara cedri (strain Cc).